The chain runs to 389 residues: Probable transcription factor FL (389 aa).

Disordered stretches follow at residues 1–41 and 140–226; these read MDPN…ANVP and EHDM…HPFV. Positions 19-39 are enriched in pro residues; sequence PPAPAPVPPPPPPPPPPPPAN. Residues 159-180 are compositionally biased toward basic residues; that stretch reads VTGKKQAKKGSAARKGKKARRK. The Nuclear localization signal motif lies at 161-168; it reads GKKQAKKG. The span at 190-201 shows a compositional bias: acidic residues; it reads QEDEMDCCDEDG. 3 DNA-binding regions span residues 221–225, 290–297, and 361–364; these read REHPF, NKPKMRHY, and YVPT.

The protein belongs to the FLO/LFY family. Interacts with APO1. In terms of tissue distribution, in very young panicle but not in mature florets, mature leaves, roots or apical meristems.

The protein localises to the nucleus. Probable transcription factor. Together with APO1, involved in the temporal regulation of meristem size and identity during both vegetative and reproductive developments through interaction with APO1. Promotes flowering. The polypeptide is Probable transcription factor FL (Oryza sativa subsp. japonica (Rice)).